Consider the following 217-residue polypeptide: Adenylate kinase (217 aa).

ATP is bound at residue 10-15 (GAGKGT). An NMP region spans residues 30–59 (STGDLFRANISQQTELGKLAKSYMNAGNLV). Residues T31, R36, 57 to 59 (NLV), 85 to 88 (GFPR), and Q92 contribute to the AMP site. Residues 126–164 (GRRVCRNEPKHVFHVTYTPPKKEGVCDVCGGELYQRDDD) form an LID region. Residues R127 and 137-138 (VF) each bind ATP. Residues R161 and R172 each coordinate AMP. G200 contacts ATP.

Belongs to the adenylate kinase family. In terms of assembly, monomer.

Its subcellular location is the cytoplasm. The catalysed reaction is AMP + ATP = 2 ADP. It participates in purine metabolism; AMP biosynthesis via salvage pathway; AMP from ADP: step 1/1. Catalyzes the reversible transfer of the terminal phosphate group between ATP and AMP. Plays an important role in cellular energy homeostasis and in adenine nucleotide metabolism. This is Adenylate kinase from Streptomyces coelicolor (strain ATCC BAA-471 / A3(2) / M145).